The sequence spans 116 residues: Ribosome-binding factor A (116 aa).

Belongs to the RbfA family. As to quaternary structure, monomer. Binds 30S ribosomal subunits, but not 50S ribosomal subunits or 70S ribosomes.

The protein localises to the cytoplasm. Its function is as follows. One of several proteins that assist in the late maturation steps of the functional core of the 30S ribosomal subunit. Associates with free 30S ribosomal subunits (but not with 30S subunits that are part of 70S ribosomes or polysomes). Required for efficient processing of 16S rRNA. May interact with the 5'-terminal helix region of 16S rRNA. The sequence is that of Ribosome-binding factor A from Halalkalibacterium halodurans (strain ATCC BAA-125 / DSM 18197 / FERM 7344 / JCM 9153 / C-125) (Bacillus halodurans).